Consider the following 1368-residue polypeptide: DNA-directed RNA polymerase subunit beta (1368 aa).

This sequence belongs to the RNA polymerase beta chain family. As to quaternary structure, the RNAP catalytic core consists of 2 alpha, 1 beta, 1 beta' and 1 omega subunit. When a sigma factor is associated with the core the holoenzyme is formed, which can initiate transcription.

It catalyses the reaction RNA(n) + a ribonucleoside 5'-triphosphate = RNA(n+1) + diphosphate. In terms of biological role, DNA-dependent RNA polymerase catalyzes the transcription of DNA into RNA using the four ribonucleoside triphosphates as substrates. This is DNA-directed RNA polymerase subunit beta from Burkholderia ambifaria (strain MC40-6).